The sequence spans 215 residues: Large ribosomal subunit protein eL14 (215 aa).

Position 79 is an N6-acetyllysine (Lys-79). At Lys-85 the chain carries N6-acetyllysine; alternate. Lys-85 bears the N6-succinyllysine; alternate mark. Residue Lys-124 forms a Glycyl lysine isopeptide (Lys-Gly) (interchain with G-Cter in SUMO2) linkage. Position 139 is a phosphoserine (Ser-139). The segment at 161-215 is disordered; the sequence is VPAKKITAASKKAPAQKVPAQKATGQKAAPAPKAQKGQKAPAQKAPAPKASGKKA. 6 consecutive repeat copies span residues 171-175, 176-180, 181-185, 186-190, 193-195, and 196-198. Residues 171–190 form a 4 X 5 AA tandem repeats of Q-K-A-[PAS]-X region; sequence KKAPAQKVPAQKATGQKAAP. The interval 193–198 is 2 X 3 AA tandem repeats of K-[GA]-Q; sequence KAQKGQ. Lys-204 carries the post-translational modification N6-succinyllysine.

Belongs to the eukaryotic ribosomal protein eL14 family. As to quaternary structure, component of the large ribosomal subunit.

The protein resides in the cytoplasm. In terms of biological role, component of the large ribosomal subunit. The ribosome is a large ribonucleoprotein complex responsible for the synthesis of proteins in the cell. This is Large ribosomal subunit protein eL14 (RPL14) from Homo sapiens (Human).